The sequence spans 97 residues: Citrate lyase acyl carrier protein (97 aa).

The residue at position 14 (Ser-14) is an O-(phosphoribosyl dephospho-coenzyme A)serine.

Belongs to the CitD family. As to quaternary structure, oligomer with a subunit composition of (alpha,beta,gamma)6.

It localises to the cytoplasm. Its function is as follows. Covalent carrier of the coenzyme of citrate lyase. The polypeptide is Citrate lyase acyl carrier protein (Klebsiella pneumoniae subsp. pneumoniae (strain ATCC 700721 / MGH 78578)).